Here is a 397-residue protein sequence, read N- to C-terminus: Phosphoglycerate kinase (397 aa).

Substrate contacts are provided by residues 26–28, Arg-42, 65–68, Arg-119, and Arg-152; these read DLN and HLGR. ATP is bound by residues Lys-203, Glu-325, and 351-354; that span reads GGDT.

Belongs to the phosphoglycerate kinase family. As to quaternary structure, monomer.

The protein localises to the cytoplasm. The enzyme catalyses (2R)-3-phosphoglycerate + ATP = (2R)-3-phospho-glyceroyl phosphate + ADP. It functions in the pathway carbohydrate degradation; glycolysis; pyruvate from D-glyceraldehyde 3-phosphate: step 2/5. In Bordetella bronchiseptica (strain ATCC BAA-588 / NCTC 13252 / RB50) (Alcaligenes bronchisepticus), this protein is Phosphoglycerate kinase.